A 465-amino-acid polypeptide reads, in one-letter code: Probable oxidoreductase AIM17 (465 aa).

A mitochondrion-targeting transit peptide spans 1–16 (MLRSNLCRGSRILARL). The Fe cation site is built by His-246, Asp-248, and His-428.

Belongs to the gamma-BBH/TMLD family. It depends on Fe(2+) as a cofactor. Requires L-ascorbate as cofactor.

It localises to the mitochondrion. This Saccharomyces cerevisiae (strain ATCC 204508 / S288c) (Baker's yeast) protein is Probable oxidoreductase AIM17 (AIM17).